The following is a 261-amino-acid chain: Cathepsin G (261 aa).

A signal peptide spans 1 to 18; the sequence is MQPLLLLLTFILLQGDEA. Residues 19 to 20 constitute a propeptide, activation peptide; the sequence is GK. Positions 21 to 25 are important for antimicrobial activity; it reads IIGGR. Residues 21-243 enclose the Peptidase S1 domain; sequence IIGGREARPH…FMPWIKRTMR (223 aa). The cysteines at positions 49 and 65 are disulfide-linked. The active-site Charge relay system is His64. A glycan (N-linked (GlcNAc...) asparagine) is linked at Asn71. Residues 97–111 form an important for antimicrobial activity region; sequence HPDYNPQNIRNDIML. Catalysis depends on Asp108, which acts as the Charge relay system. 2 disulfide bridges follow: Cys142–Cys207 and Cys172–Cys186. Ser201 functions as the Charge relay system in the catalytic mechanism.

It belongs to the peptidase S1 family. In adult, detected only in bone marrow where expression is restricted to a small population of early myeloid cells.

It localises to the cell membrane. The protein resides in the cytoplasmic granule. Its subcellular location is the secreted. It is found in the cytoplasm. The protein localises to the cytosol. It localises to the lysosome. The protein resides in the nucleus. The catalysed reaction is Specificity similar to chymotrypsin C.. Inhibited by chymostatin, phenylmethanesulfonyl fluoride and diisopropyl fluorophosphate. In terms of biological role, serine protease with trypsin- and chymotrypsin-like specificity. Also displays antibacterial activity against Gram-negative and Gram-positive bacteria independent of its protease activity. Prefers Phe and Tyr residues in the P1 position of substrates but also cleaves efficiently after Trp and Leu. Shows a preference for negatively charged amino acids in the P2' position and for aliphatic amino acids both upstream and downstream of the cleavage site. Required for recruitment and activation of platelets which is mediated by the F2RL3/PAR4 platelet receptor. Binds reversibly to and stimulates B cells and CD4(+) and CD8(+) T cells. Also binds reversibly to natural killer (NK) cells and enhances NK cell cytotoxicity through its protease activity. Cleaves complement C3. Cleaves vimentin. Cleaves thrombin receptor F2R/PAR1. Cleaves the synovial mucin-type protein PRG4/lubricin. Cleaves and activates IL36G which promotes expression of chemokines CXCL1 and CXLC8 in keratinocytes. Cleaves IL33 into mature forms which have greater activity than the unprocessed form. Cleaves coagulation factor F8 to produce a partially activated form. Also cleaves and activates coagulation factor F10. Cleaves leukocyte cell surface protein SPN/CD43 to release its extracellular domain and trigger its intramembrane proteolysis by gamma-secretase, releasing the CD43 cytoplasmic tail chain (CD43-ct) which translocates to the nucleus. During apoptosis, cleaves SMARCA2/BRM to produce a 160 kDa cleavage product which localizes to the cytosol. Cleaves MBP in B cell lysosomes at '221-Phe-|-Lys-222', degrading the major immunogenic MBP epitope and preventing the activation of MBP-specific autoreactive T cells. Cleaves annexin ANXA1 and antimicrobial peptide CAMP to produce peptides which act on neutrophil N-formyl peptide receptors to enhance the release of CXCL2. Acts as a ligand for the N-formyl peptide receptor FPR1, enhancing phagocyte chemotaxis. Has antibacterial activity against the Gram-negative bacteria N.gonorrhoeae and P.aeruginosa. Likely to act against N.gonorrhoeae by interacting with N.gonorrhoeae penA/PBP2. Exhibits potent antimicrobial activity against the Gram-positive bacterium L.monocytogenes. Has antibacterial activity against the Gram-positive bacterium S.aureus and degrades S.aureus biofilms, allowing polymorphonuclear leukocytes to penetrate the biofilm and phagocytose bacteria. Has antibacterial activity against M.tuberculosis. Induces platelet aggregation which is strongly potentiated in the presence of ELANE. In Mus musculus (Mouse), this protein is Cathepsin G (Ctsg).